The sequence spans 573 residues: MYDVIVIGAGWCGLVAAKTYLQACPDAQVLIVDGDTSIGGTWSKERLYPHLVAEAHYGLFEFSDLPMNGDSVLPDGRIPSTAVHAYLVEYATKFNLIQRIRLNTWIENVRREAGELGMHWTLTAAGSQEQLHAKKVIITTGLTSEAFIPSLPGRDEFEGEVLHSKALGHPQTVERISDPSIRHVVVYGGSKSAFDAVYLLLRAGKTVDWVIREGGGGPSMMTPLSVLGQPSFRLNNSRLLALLSPHPFGTPGEQLSWWQRVVHHRSGQWAQFMILTIWRVMNYLFLRPWGYDSSPNGKRLKPLLGLDSLFWSPATLGVMTHPELWEEIHSGQRVKIHRDAITGLARDKRVMLSSGQELSSADLVVCATGWHARHSFFAPEEQLAVGLPGTASFDPKSQQKWLDLQRTADREITEELPILQKNPIPPPPLRCEDDHHLYRFIAPSRETPSHERSIAFVGFLRTAGAPIVYEAQSLWATAYLTGALEVPEAPQREREIARTNAWIRRRYLCGRKVPFALFDFLPYVDMLYRDLGINPNRKPNQIAELCGLYRPQDFKGVVSEWLANQQAKDVNGN.

The N-terminal stretch at 1–17 (MYDVIVIGAGWCGLVAA) is a signal peptide. Ile106 is an FAD binding site. The N-linked (GlcNAc...) asparagine glycan is linked to Asn235.

This sequence belongs to the FAD-binding monooxygenase family. It depends on FAD as a cofactor.

Its pathway is antifungal biosynthesis. Functionally, FAD-dependent monooxygenase; part of the gene cluster that mediates the biosynthesis of the tetrahydropyranyl antifungal agent restricticin that acts as an inhibitor of CYP51 and blocks the ergosterol biosynthesis. The highly reducing polyketide synthase resH, the short chain dehydrogenase resG, the cyclase resF, the FAD-dependent monooxygenase resA and the enoylreductase resD are required to generate the first stable intermediate desmethylrestrictinol. ResH with resD biosynthesize the first polyketide chain intermediate that is reduced by resG, followed by epoxidation by resA before 6-endo cyclization via epoxide opening by resF leads to desmethylrestrictinol. The methyltransferase resE then catalyzes the C4 O-methylation of desmethylrestrictinol to produce restrictinol, and the nonribosomal peptide synthetase resC catalyzes the C3 esterification of restrictinol with glycine that leads to restricticin. The chain is FAD-dependent monooxygenase resA from Aspergillus sclerotiorum.